Here is a 668-residue protein sequence, read N- to C-terminus: Trehalase (668 aa).

The tract at residues 1–23 is disordered; the sequence is MVLQQTEPTDGADRKASDGPLTV.

This sequence belongs to the glycosyl hydrolase 15 family. In terms of assembly, homomultimer of 20 or more subunits. Mg(2+) is required as a cofactor. Requires phosphate as cofactor.

The catalysed reaction is alpha,alpha-trehalose + H2O = alpha-D-glucose + beta-D-glucose. It functions in the pathway glycan degradation; trehalose degradation; D-glucose from alpha,alpha-trehalose: step 1/1. Its activity is regulated as follows. Inhibited by pyrophosphate and polyphosphates. Also competitively inhibited by validoxylamine and castanospermine, but not by trehazolin. Catalyzes the hydrolysis of alpha,alpha-trehalose into two molecules of D-glucose. Does not hydrolyze maltose, isomaltose, sucrose, cellobiose, p-nitrophenyl-alpha-D-glucopyranoside, and methyl-alpha-D-glucopyranoside. Is also inactive on alpha,beta-trehalose, beta,beta-trehalose, alpha,alpha-trehalose-6,6'-dibehenate, trehalulose, nigerose, and trehalose dimycolate. In Mycolicibacterium smegmatis (strain ATCC 700084 / mc(2)155) (Mycobacterium smegmatis), this protein is Trehalase.